The chain runs to 298 residues: NAD-dependent L-serine dehydrogenase (298 aa).

NAD(+) contacts are provided by residues 2 to 31 (KQIA…NVFD), 65 to 66 (LP), P66, and T96. Residue K171 is part of the active site. K246 is an NAD(+) binding site.

The protein belongs to the HIBADH-related family. As to quaternary structure, homotetramer, dimer of dimers.

It catalyses the reaction L-serine + NAD(+) = aminoacetaldehyde + CO2 + NADH. It functions in the pathway amino-acid degradation. Functionally, NAD-dependent L-serine dehydrogenase that catalyzes the oxidation of L-serine and methyl-L-serine and is possibly involved in serine catabolism. Has low activity toward beta-hydroxyisobutyrate. This chain is NAD-dependent L-serine dehydrogenase, found in Pseudomonas aeruginosa (strain ATCC 15692 / DSM 22644 / CIP 104116 / JCM 14847 / LMG 12228 / 1C / PRS 101 / PAO1).